Reading from the N-terminus, the 24-residue chain is General odorant-binding protein (24 aa).

It belongs to the PBP/GOBP family. Homodimer. Antenna.

In terms of biological role, present in the aqueous fluid surrounding olfactory sensory dendrites and are thought to aid in the capture and transport of hydrophobic odorants into and through this fluid. This is General odorant-binding protein from Antheraea polyphemus (Polyphemus moth).